A 183-amino-acid chain; its full sequence is ATP-dependent protease subunit HslV (183 aa).

T13 is a catalytic residue. Na(+) is bound by residues G168, C171, and T174.

The protein belongs to the peptidase T1B family. HslV subfamily. A double ring-shaped homohexamer of HslV is capped on each side by a ring-shaped HslU homohexamer. The assembly of the HslU/HslV complex is dependent on binding of ATP.

It localises to the cytoplasm. The enzyme catalyses ATP-dependent cleavage of peptide bonds with broad specificity.. Its activity is regulated as follows. Allosterically activated by HslU binding. In terms of biological role, protease subunit of a proteasome-like degradation complex believed to be a general protein degrading machinery. The polypeptide is ATP-dependent protease subunit HslV (Xanthomonas campestris pv. campestris (strain ATCC 33913 / DSM 3586 / NCPPB 528 / LMG 568 / P 25)).